The chain runs to 1502 residues: Nucleoporin NUP170 (1502 aa).

The segment at 1–31 (MFQSFFHNNGPAAAGETFSDSRSYPLTNHQE) is disordered. The segment covering 18-30 (FSDSRSYPLTNHQ) has biased composition (polar residues). The interval 233-261 (LISTTMELFMFAISLDKATNELSVFNTHL) is leucine-zipper. Residue Ser-1247 is modified to Phosphoserine.

It belongs to the non-repetitive/WGA-negative nucleoporin family. In terms of assembly, component of the nuclear pore complex (NPC). NPC constitutes the exclusive means of nucleocytoplasmic transport. NPCs allow the passive diffusion of ions and small molecules and the active, nuclear transport receptor-mediated bidirectional transport of macromolecules such as proteins, RNAs, ribonucleoparticles (RNPs), and ribosomal subunits across the nuclear envelope. Due to its 8-fold rotational symmetry, all subunits are present with 8 copies or multiples thereof. During mitosis NUP53 changes its binding partner within the NPC from NUP170 to NIC96, exposing a high affinity binding site for the karyopherin PSE1, and retaining it in the NPC.

It localises to the nucleus. It is found in the nuclear pore complex. The protein resides in the nucleus membrane. In terms of biological role, functions as a component of the nuclear pore complex (NPC). NPC components, collectively referred to as nucleoporins (NUPs), can play the role of both NPC structural components and of docking or interaction partners for transiently associated nuclear transport factors. NUP170 probably plays an important role in NPC assembly and organization. In addition it is required for chromosome transmission fidelity. The sequence is that of Nucleoporin NUP170 (NUP170) from Saccharomyces cerevisiae (strain ATCC 204508 / S288c) (Baker's yeast).